The primary structure comprises 169 residues: Peptide methionine sulfoxide reductase MsrA (169 aa).

Cys10 is a catalytic residue.

It belongs to the MsrA Met sulfoxide reductase family.

It carries out the reaction L-methionyl-[protein] + [thioredoxin]-disulfide + H2O = L-methionyl-(S)-S-oxide-[protein] + [thioredoxin]-dithiol. It catalyses the reaction [thioredoxin]-disulfide + L-methionine + H2O = L-methionine (S)-S-oxide + [thioredoxin]-dithiol. Its function is as follows. Has an important function as a repair enzyme for proteins that have been inactivated by oxidation. Catalyzes the reversible oxidation-reduction of methionine sulfoxide in proteins to methionine. This is Peptide methionine sulfoxide reductase MsrA from Streptococcus agalactiae serotype III (strain NEM316).